The following is a 572-amino-acid chain: Phosphoenolpyruvate-protein phosphotransferase (572 aa).

Catalysis depends on H191, which acts as the Tele-phosphohistidine intermediate. R298 and R334 together coordinate phosphoenolpyruvate. Residues E433 and D457 each contribute to the Mg(2+) site. Residues 456–457 (ND) and R467 contribute to the phosphoenolpyruvate site. C504 acts as the Proton donor in catalysis.

This sequence belongs to the PEP-utilizing enzyme family. Homodimer. It depends on Mg(2+) as a cofactor.

It is found in the cytoplasm. The catalysed reaction is L-histidyl-[protein] + phosphoenolpyruvate = N(pros)-phospho-L-histidyl-[protein] + pyruvate. Its function is as follows. General (non sugar-specific) component of the phosphoenolpyruvate-dependent sugar phosphotransferase system (sugar PTS). This major carbohydrate active-transport system catalyzes the phosphorylation of incoming sugar substrates concomitantly with their translocation across the cell membrane. Enzyme I transfers the phosphoryl group from phosphoenolpyruvate (PEP) to the phosphoryl carrier protein (HPr). This Staphylococcus aureus (strain COL) protein is Phosphoenolpyruvate-protein phosphotransferase (ptsI).